A 240-amino-acid chain; its full sequence is Prolactin-8A6 (240 aa).

The first 30 residues, 1 to 30, serve as a signal peptide directing secretion; the sequence is MALLLSQPHFSGPLLLLVVSNLLLWEKAAS. Cystine bridges form between cysteine 34–cysteine 41, cysteine 101–cysteine 216, and cysteine 233–cysteine 240. N-linked (GlcNAc...) asparagine glycosylation is present at asparagine 212.

It belongs to the somatotropin/prolactin family. As to expression, expressed specifically in the spongiotrophoblast and trophoblast giant cells from the junctional zone of the chorioallantoic placenta.

It is found in the secreted. The polypeptide is Prolactin-8A6 (Prl8a6) (Mus musculus (Mouse)).